The primary structure comprises 92 residues: C-C motif chemokine 22 (92 aa).

The N-terminal stretch at 1 to 24 is a signal peptide; sequence MATLRVPLLVALVLLAVAIQTSDA. Intrachain disulfides connect cysteine 36/cysteine 60 and cysteine 37/cysteine 76.

The protein belongs to the intercrine beta (chemokine CC) family. Expressed by activated splenic B-lymphocytes and dendritic cells. Low expression in lung, thymocytes, lymph node, and unstimulated splenic cells.

It localises to the secreted. In terms of biological role, chemotactic for activated T-lymphocytes. May play an important role in the collaboration of dendritic cells and B-lymphocytes with T-cells in immune responses. This Mus musculus (Mouse) protein is C-C motif chemokine 22 (Ccl22).